Reading from the N-terminus, the 306-residue chain is Probable arylamine N-acetyltransferase 3 (306 aa).

Catalysis depends on Cys75, which acts as the Acyl-thioester intermediate. Residues His115 and Asp130 contribute to the active site.

It belongs to the arylamine N-acetyltransferase family.

It catalyses the reaction an arylamine + acetyl-CoA = an N-acetylarylamine + CoA. This is Probable arylamine N-acetyltransferase 3 from Dictyostelium discoideum (Social amoeba).